The sequence spans 495 residues: SH2 domain-containing adapter protein E (495 aa).

Disordered stretches follow at residues 51–190 (TVSE…DKGK), 203–233 (DYAD…EPYD), and 256–327 (LLDS…EYEQ). Serine 107 carries the post-translational modification Phosphoserine. Polar residues predominate over residues 135-144 (TKSSGCSTYI). The span at 148-157 (IKVDTQEKNG) shows a compositional bias: basic and acidic residues. The segment covering 162–181 (PSSSSSSSSSSSSASSSPSS) has biased composition (low complexity). Composition is skewed to basic and acidic residues over residues 208 to 224 (YDAK…RVGE) and 301 to 327 (PRAE…EYEQ). Positions 395–490 (WYHGAISRAE…AEHMTLLYPV (96 aa)) constitute an SH2 domain.

This Homo sapiens (Human) protein is SH2 domain-containing adapter protein E (SHE).